The following is a 24-amino-acid chain: Small ribosomal subunit protein uS5 (24 aa).

It belongs to the universal ribosomal protein uS5 family. In terms of assembly, part of the 30S ribosomal subunit. Contacts proteins S4 and S8.

With S4 and S12 plays an important role in translational accuracy. In terms of biological role, located at the back of the 30S subunit body where it stabilizes the conformation of the head with respect to the body. The polypeptide is Small ribosomal subunit protein uS5 (rpsE) (Vibrio proteolyticus (Aeromonas proteolytica)).